The chain runs to 207 residues: Ion-translocating oxidoreductase complex subunit G (207 aa).

The helical transmembrane segment at 11 to 31 (GILLGFIALLCTIISAGIYFL) threads the bilayer. Residue Thr-175 is modified to FMN phosphoryl threonine.

Belongs to the RnfG family. In terms of assembly, the complex is composed of six subunits: RnfA, RnfB, RnfC, RnfD, RnfE and RnfG. Requires FMN as cofactor.

It localises to the cell inner membrane. Its function is as follows. Part of a membrane-bound complex that couples electron transfer with translocation of ions across the membrane. The sequence is that of Ion-translocating oxidoreductase complex subunit G from Haemophilus influenzae (strain PittEE).